The primary structure comprises 174 residues: UPF0316 protein LMHCC_0787 (174 aa).

3 helical membrane passes run 4–24 (GIFI…IYTV), 36–56 (LAAL…SLVL), and 62–82 (IANV…GMKI).

This sequence belongs to the UPF0316 family.

The protein resides in the cell membrane. This Listeria monocytogenes serotype 4a (strain HCC23) protein is UPF0316 protein LMHCC_0787.